The following is a 333-amino-acid chain: Taste receptor type 2 member 38 (333 aa).

The Extracellular portion of the chain corresponds to 1–17 (MLTLTRIHTVSYEVRST). Residues 18–38 (FLFISVLEFAVGFLTNAFVFL) form a helical membrane-spanning segment. At 39–55 (VNFWDVVKRQPLSNSDC) the chain is on the cytoplasmic side. Residues 56–76 (VLLCLSISRLFLHGLLFLSAI) traverse the membrane as a helical segment. The Extracellular segment spans residues 77 to 94 (QLTHFQKLSEPLNHSYQA). The helical transmembrane segment at 95–115 (INMLWMIANQANLWLAACLSL) threads the bilayer. Residues 116–142 (LYCSKLIRFSHTFLICLASWVSRKISQ) are Cytoplasmic-facing. Residues 143–163 (MLLGIILCSCICTVLCVWCFF) form a helical membrane-spanning segment. Topologically, residues 164-190 (SRPHFTVTTVLFMNNNTRLNWQIKDLN) are extracellular. Residue asparagine 178 is glycosylated (N-linked (GlcNAc...) asparagine). A helical membrane pass occupies residues 191–211 (LFYSFLFCYLWSVPPFLLFLV). Residues 212-251 (SSGMLTVSLGRHMRTMKVYTRDSRDPSLEAHIKALKSLVS) lie on the Cytoplasmic side of the membrane. Residues 252 to 272 (FFCFFVISSCAAFISVPLLIL) traverse the membrane as a helical segment. At 273–276 (WRDK) the chain is on the extracellular side. The helical transmembrane segment at 277 to 297 (IGVMVCVGIMAACPSGHAAVL) threads the bilayer. The Cytoplasmic segment spans residues 298–333 (ISGNAKLRRAVTTILLWAQSSLKVRADHKADSRTLC).

This sequence belongs to the G-protein coupled receptor T2R family.

It is found in the membrane. Receptor that may play a role in the perception of bitterness and is gustducin-linked. May play a role in sensing the chemical composition of the gastrointestinal content. The activity of this receptor may stimulate alpha gustducin, mediate PLC-beta-2 activation and lead to the gating of TRPM5. This is Taste receptor type 2 member 38 (TAS2R38) from Pan paniscus (Pygmy chimpanzee).